Here is a 223-residue protein sequence, read N- to C-terminus: DNA mismatch repair protein MutH (223 aa).

This sequence belongs to the MutH family.

Its subcellular location is the cytoplasm. Functionally, sequence-specific endonuclease that cleaves unmethylated GATC sequences. It is involved in DNA mismatch repair. The sequence is that of DNA mismatch repair protein MutH from Shewanella oneidensis (strain ATCC 700550 / JCM 31522 / CIP 106686 / LMG 19005 / NCIMB 14063 / MR-1).